Here is a 147-residue protein sequence, read N- to C-terminus: Sec-independent protein translocase protein TatB (147 aa).

Residues F2–G22 form a helical membrane-spanning segment. Positions E68–G147 are disordered. A compositionally biased stretch (polar residues) spans G71 to Y97. The segment covering P112 to P133 has biased composition (low complexity).

This sequence belongs to the TatB family. In terms of assembly, the Tat system comprises two distinct complexes: a TatABC complex, containing multiple copies of TatA, TatB and TatC subunits, and a separate TatA complex, containing only TatA subunits. Substrates initially bind to the TatABC complex, which probably triggers association of the separate TatA complex to form the active translocon.

Its subcellular location is the cell inner membrane. Its function is as follows. Part of the twin-arginine translocation (Tat) system that transports large folded proteins containing a characteristic twin-arginine motif in their signal peptide across membranes. Together with TatC, TatB is part of a receptor directly interacting with Tat signal peptides. TatB may form an oligomeric binding site that transiently accommodates folded Tat precursor proteins before their translocation. The chain is Sec-independent protein translocase protein TatB from Shewanella sp. (strain MR-4).